The following is a 101-amino-acid chain: Putative pterin-4-alpha-carbinolamine dehydratase (101 aa).

It belongs to the pterin-4-alpha-carbinolamine dehydratase family.

The catalysed reaction is (4aS,6R)-4a-hydroxy-L-erythro-5,6,7,8-tetrahydrobiopterin = (6R)-L-erythro-6,7-dihydrobiopterin + H2O. The sequence is that of Putative pterin-4-alpha-carbinolamine dehydratase from Rhizobium johnstonii (strain DSM 114642 / LMG 32736 / 3841) (Rhizobium leguminosarum bv. viciae).